Consider the following 307-residue polypeptide: Ribonuclease Z (307 aa).

Residues His62, His64, Asp66, His67, His139, Asp210, and His268 each coordinate Zn(2+). Catalysis depends on Asp66, which acts as the Proton acceptor.

It belongs to the RNase Z family. In terms of assembly, homodimer. It depends on Zn(2+) as a cofactor.

It catalyses the reaction Endonucleolytic cleavage of RNA, removing extra 3' nucleotides from tRNA precursor, generating 3' termini of tRNAs. A 3'-hydroxy group is left at the tRNA terminus and a 5'-phosphoryl group is left at the trailer molecule.. In terms of biological role, zinc phosphodiesterase, which displays some tRNA 3'-processing endonuclease activity. Probably involved in tRNA maturation, by removing a 3'-trailer from precursor tRNA. This chain is Ribonuclease Z, found in Myxococcus xanthus (strain DK1622).